The following is a 447-amino-acid chain: MAPPRCRREKLNSTVAEGGVQAADGQRCQRGLPLLGAVPQAAPYTRNNGMGECRRGHRQGHRAEVHDNRPADKVGQGRWLNSQTRRPCRKEVTSFQFFPFLIFHTGGAEMEPLEIMDEGEGPLVGWCDPDEFREWVRDNKSREMADKTMSAEEAVSNFIKDGMYVASGGFGHVRVSMNIIYEIIRQGVKGLTMAGKTSVHDLDVLMAAGCVEKVEAAYSFGHELRGLSPASRRKVEGGEVKVITEWSNAALQWRFKAAAMGLPFIPARILMGTDTFKKSSAKIIRDPYSGKPVTLIPACFPDVAIIHVHRADKYGNAQIDGILVEDYELARAAKRLIVTTEEIVPTDKIRESPWRTSIPYFLVDAVVEQPFASHPCNMPLLYYFDEEHIAEYLALTRTEEGAKEYFEKYVYGVNDFWEYLEVVGGSKRLEKLRRIEQLRERPVYPWR.

The interval 39 to 76 (PQAAPYTRNNGMGECRRGHRQGHRAEVHDNRPADKVGQ) is disordered. The span at 61–72 (HRAEVHDNRPAD) shows a compositional bias: basic and acidic residues.

It belongs to the 3-oxoacid CoA-transferase subunit A family.

This is an uncharacterized protein from Archaeoglobus fulgidus (strain ATCC 49558 / DSM 4304 / JCM 9628 / NBRC 100126 / VC-16).